Reading from the N-terminus, the 248-residue chain is MYKLVLIRHGESTWNKENRFTGWVDVDLTEQGRNEAYQAGELLKEAGYTFDIAYTSVLKRAIRTLWHVQDKMDLMYLPVVHSWRLNERHYGALSGLNKAETAAKFGDEQVLVWRRSYDTPPPALEPTDERAPFNDPRYAKVPREQLPLTECLKDTVARVLPLWNESIAPAVRAGKQVLIAAHGNSLRALIKYLDGISDSDIVGLNIPNGVPLVYELDENLKPIKHYYLGDQEAIAQAQAAVAKQGKAG.

Substrate is bound by residues 8–15 (RHGESTWN), 21–22 (TG), R60, 87–90 (ERHY), K98, 114–115 (RR), and 183–184 (GN). Residue H9 is the Tele-phosphohistidine intermediate of the active site. Catalysis depends on E87, which acts as the Proton donor/acceptor.

This sequence belongs to the phosphoglycerate mutase family. BPG-dependent PGAM subfamily. Homodimer.

It catalyses the reaction (2R)-2-phosphoglycerate = (2R)-3-phosphoglycerate. The protein operates within carbohydrate degradation; glycolysis; pyruvate from D-glyceraldehyde 3-phosphate: step 3/5. Functionally, catalyzes the interconversion of 2-phosphoglycerate and 3-phosphoglycerate. This Burkholderia cenocepacia (strain ATCC BAA-245 / DSM 16553 / LMG 16656 / NCTC 13227 / J2315 / CF5610) (Burkholderia cepacia (strain J2315)) protein is 2,3-bisphosphoglycerate-dependent phosphoglycerate mutase.